A 470-amino-acid polypeptide reads, in one-letter code: E3 SUMO-protein ligase EGR2 (470 aa).

A compositionally biased stretch (low complexity) spans 126 to 141 (PPASTTASSSVTSASP). 3 disordered regions span residues 126 to 153 (PPASTTASSSVTSASPNPLATGPLGVCT), 159 to 178 (PELDHLYSPPPPPPPYSGCT), and 185 to 210 (PSAFLSPPSTTSTSSLAYQPPPSYPS). Positions 190–202 (SPPSTTSTSSLAY) are enriched in low complexity. Residue lysine 247 is modified to N6-acetyllysine; by EP300. The segment covering 275–291 (GPGAGVTGPGASGGGEG) has biased composition (gly residues). The tract at residues 275–345 (GPGAGVTGPG…PYPCPAEGCD (71 aa)) is disordered. 3 consecutive C2H2-type zinc fingers follow at residues 337–361 (YPCPAEGCDRRFSRSDELTRHIRIH), 367–389 (FQCRICMRNFSRSDHLTTHIRTH), and 395–417 (FACDYCGRKFARSDERKRHTKIH). Positions 408 to 470 (DERKRHTKIH…ASCTSRTRTP (63 aa)) are disordered. Residues 412 to 422 (RHTKIHLRQKE) show a composition bias toward basic residues. A compositionally biased stretch (low complexity) spans 426 to 439 (SAPSAPPSAQSSAS). The segment covering 440-450 (GPGGSQAGGSL) has biased composition (gly residues).

Belongs to the EGR C2H2-type zinc-finger protein family. In terms of assembly, interacts with HCFC1. Interacts with WWP2. Interacts with UBC9. Interacts with CITED1. Interacts (via phosphorylated form) with SFN. Ubiquitinated by WWP2 leading to proteasomal degradation. In terms of processing, acetylated at Lys-247. May be deacetylated by HDAC6, HDAC10 or SIRT1. As to expression, expressed mainly in the thymus.

The protein resides in the nucleus. Its pathway is protein modification; protein sumoylation. In terms of biological role, sequence-specific DNA-binding transcription factor. Plays a role in hindbrain segmentation by regulating the expression of a subset of homeobox containing genes and in Schwann cell myelination by regulating the expression of genes involved in the formation and maintenance of myelin. Binds to two EGR2-consensus sites EGR2A (5'-CTGTAGGAG-3') and EGR2B (5'-ATGTAGGTG-3') in the HOXB3 enhancer and promotes HOXB3 transcriptional activation. Binds to specific DNA sites located in the promoter region of HOXA4, HOXB2 and ERBB2. Regulates hindbrain segmentation by controlling the expression of Hox genes, such as HOXA4, HOXB3 and HOXB2, and thereby specifying odd and even rhombomeres. Promotes the expression of HOXB3 in the rhombomere r5 and of HOXB3 in r3 and r5 in the hindbrain. Regulates myelination in the peripheral nervous system after birth, possibly by regulating the expression of myelin proteins, such as MPZ, and by promoting the differentiation of Schwann cells. Involved in the development of the jaw openener musculature, probably by playing a role in its innervation through trigeminal motor neurons. May play a role in adipogenesis, possibly by regulating the expression of CEBPB. E3 SUMO-protein ligase helping SUMO1 conjugation to its coregulators NAB1 and NAB2, whose sumoylation down-regulates EGR2 transcriptional activity. In Mus musculus (Mouse), this protein is E3 SUMO-protein ligase EGR2 (Egr2).